The chain runs to 261 residues: tRNA 5-carboxymethoxyuridine methyltransferase (261 aa).

Residues Arg26, 52-53, Asp73, 102-103, and His119 contribute to the S-adenosyl-L-methionine site; these read GG and AQ.

The protein belongs to the class I-like SAM-binding methyltransferase superfamily. CmoM family.

The enzyme catalyses 5-carboxymethoxyuridine(34) in tRNA + S-adenosyl-L-methionine = 5-methoxycarbonylmethoxyuridine(34) in tRNA + S-adenosyl-L-homocysteine. Its function is as follows. Catalyzes the methylation of 5-carboxymethoxyuridine (cmo5U) to form 5-methoxycarbonylmethoxyuridine (mcmo5U) at position 34 in tRNAs. Four tRNAs (tRNA(Ala1), tRNA(Ser1), tRNA(Pro3) and tRNA(Thr4)) are fully modified with mcmo5U in stationary-phase E.coli. Also present at low frequency in tRNA(Leu3) and tRNA(Val1). The protein is tRNA 5-carboxymethoxyuridine methyltransferase of Escherichia coli (strain K12).